The chain runs to 112 residues: uncharacterized protein (112 aa).

Residues 85-105 (IVQLIILFAIIITNPNAIELI) form a helical membrane-spanning segment.

This sequence belongs to the M.jannaschii MJ0023/MJ0349/MJ1072/MJ1074/MJ1107/MJECL16 family.

The protein localises to the membrane. This is an uncharacterized protein from Methanocaldococcus jannaschii (strain ATCC 43067 / DSM 2661 / JAL-1 / JCM 10045 / NBRC 100440) (Methanococcus jannaschii).